Reading from the N-terminus, the 466-residue chain is Carboxy-terminal processing protease CtpA (466 aa).

Residues methionine 1–serine 36 form the signal peptide. One can recognise a PDZ domain in the interval aspartate 96 to alanine 174. Catalysis depends on charge relay system residues serine 297, glutamate 308, and lysine 322.

The protein belongs to the peptidase S41A family.

It carries out the reaction The enzyme shows specific recognition of a C-terminal tripeptide, Xaa-Yaa-Zaa, in which Xaa is preferably Ala or Leu, Yaa is preferably Ala or Tyr, and Zaa is preferably Ala, but then cleaves at a variable distance from the C-terminus. A typical cleavage is -Ala-Ala-|-Arg-Ala-Ala-Lys-Glu-Asn-Tyr-Ala-Leu-Ala-Ala.. The protein is Carboxy-terminal processing protease CtpA (ctpA) of Bacillus subtilis (strain 168).